Here is a 103-residue protein sequence, read N- to C-terminus: uncharacterized protein (103 aa).

The interval 1-103 (MAGARRRARC…WRGGSCTSQR (103 aa)) is disordered. Residues 35–44 (GSGQPRWWPW) show a composition bias toward low complexity. 2 stretches are compositionally biased toward basic residues: residues 55-65 (RRPGPGRRARS) and 74-84 (RPPHSRTRARR).

This sequence belongs to the epstein-barr virus RPMS1 family.

This is an uncharacterized protein from Homo sapiens (Human).